The primary structure comprises 323 residues: CYFIP-related Rac1 interactor A (323 aa).

Belongs to the CYRI family.

Its subcellular location is the membrane. Its function is as follows. May negatively regulate RAC1 signaling and RAC1-driven cytoskeletal remodeling. May regulate chemotaxis, cell migration and epithelial polarization by controlling the polarity, plasticity, duration and extent of protrusions. In Gallus gallus (Chicken), this protein is CYFIP-related Rac1 interactor A (CYRIA).